Consider the following 281-residue polypeptide: 4-diphosphocytidyl-2-C-methyl-D-erythritol kinase (281 aa).

Lysine 11 is a catalytic residue. 92-102 (LVSAGLAGGSA) contributes to the ATP binding site. Aspartate 132 is a catalytic residue.

The protein belongs to the GHMP kinase family. IspE subfamily.

It catalyses the reaction 4-CDP-2-C-methyl-D-erythritol + ATP = 4-CDP-2-C-methyl-D-erythritol 2-phosphate + ADP + H(+). The protein operates within isoprenoid biosynthesis; isopentenyl diphosphate biosynthesis via DXP pathway; isopentenyl diphosphate from 1-deoxy-D-xylulose 5-phosphate: step 3/6. In terms of biological role, catalyzes the phosphorylation of the position 2 hydroxy group of 4-diphosphocytidyl-2C-methyl-D-erythritol. The polypeptide is 4-diphosphocytidyl-2-C-methyl-D-erythritol kinase (Ehrlichia ruminantium (strain Gardel)).